The primary structure comprises 449 residues: Exodeoxyribonuclease 7 large subunit (449 aa).

Belongs to the XseA family. As to quaternary structure, heterooligomer composed of large and small subunits.

The protein localises to the cytoplasm. It carries out the reaction Exonucleolytic cleavage in either 5'- to 3'- or 3'- to 5'-direction to yield nucleoside 5'-phosphates.. In terms of biological role, bidirectionally degrades single-stranded DNA into large acid-insoluble oligonucleotides, which are then degraded further into small acid-soluble oligonucleotides. This is Exodeoxyribonuclease 7 large subunit from Aliivibrio fischeri (strain MJ11) (Vibrio fischeri).